The primary structure comprises 331 residues: Adenosine deaminase (331 aa).

Positions 12 and 14 each coordinate Zn(2+). The substrate site is built by histidine 14, aspartate 16, and glycine 170. Histidine 197 contacts Zn(2+). Glutamate 200 (proton donor) is an active-site residue. Aspartate 278 contributes to the Zn(2+) binding site. Residue aspartate 279 coordinates substrate.

It belongs to the metallo-dependent hydrolases superfamily. Adenosine and AMP deaminases family. Adenosine deaminase subfamily. Zn(2+) is required as a cofactor.

It catalyses the reaction adenosine + H2O + H(+) = inosine + NH4(+). The catalysed reaction is 2'-deoxyadenosine + H2O + H(+) = 2'-deoxyinosine + NH4(+). Catalyzes the hydrolytic deamination of adenosine and 2-deoxyadenosine. The chain is Adenosine deaminase from Shewanella sp. (strain MR-4).